The primary structure comprises 793 residues: DNA mismatch repair protein MutS (793 aa).

An ATP-binding site is contributed by 589–596 (GPNMSGKS).

The protein belongs to the DNA mismatch repair MutS family.

This protein is involved in the repair of mismatches in DNA. It is possible that it carries out the mismatch recognition step. This protein has a weak ATPase activity. This is DNA mismatch repair protein MutS from Thermotoga petrophila (strain ATCC BAA-488 / DSM 13995 / JCM 10881 / RKU-1).